Here is a 545-residue protein sequence, read N- to C-terminus: Esterase-5B (545 aa).

The signal sequence occupies residues 1-19 (MYCAKLILLLGCFWISSSA). A disulfide bridge links C84 with C103. Residue N113 is glycosylated (N-linked (GlcNAc...) asparagine). S207 (acyl-ester intermediate) is an active-site residue. C259 and C271 form a disulfide bridge. An N-linked (GlcNAc...) asparagine glycan is attached at N421. Residue H467 is the Charge relay system of the active site. N-linked (GlcNAc...) asparagine glycosylation occurs at N507. Residues C515 and C536 are joined by a disulfide bond.

This sequence belongs to the type-B carboxylesterase/lipase family. Homodimer.

Its subcellular location is the secreted. It carries out the reaction a carboxylic ester + H2O = an alcohol + a carboxylate + H(+). This is Esterase-5B (Est-5B) from Drosophila persimilis (Fruit fly).